A 504-amino-acid polypeptide reads, in one-letter code: MKLLEQIEKWAIETPDQTAFVWRDAKITYKQLKEDSDALAHWISSEYPDDRSPIMVYGHMQPEMIINFLGCVKAGHAYIPVDLSIPADRVQRIAENSGAKLLLSGTEVTVTDLPVRIVSEDNLKDIFFTHKGKTPNPEHAVKGDENFYIIYTSGSTGNPKGVQITYNCLVSFTKWAVEDFNLQTGQVFLNQAPFSFDLSVMDIYPSLVTGGTLWAIDKDMIARPKDLFASLEQSDIQVWTSTPSFAEMCLMEASFSESMLPNMKTFLFCGEVLPNEVARKLIERFPKATIMNTYGPTEATVAVTGIHVTEEVLDQYKSLPVGYCKSDCRLLIMKEDGTIAPDGEKGEIVIVGPSVSVGYLGSPELTEKAFTMIDGERAYKTGDAGYVENGLLFYNGRLDFQIKLHGYRMELEEIEHHLRACSYVEGAVIVPIKKGEKYDYLLAVVVPGEHSFEKEFKLTSAIKKELNERLPNYMIPRKFMYQSSIPMTPNGKVDRKKLLSEVTA.

Position 152–153 (152–153 (TS)) interacts with ATP. Asp-197 is a binding site for D-alanine. 292-297 (NTYGPT) is an ATP binding site. Val-301 is a binding site for D-alanine. ATP-binding positions include Asp-383, 394 to 397 (YNGR), and Lys-492. Position 492 (Lys-492) interacts with D-alanine.

Belongs to the ATP-dependent AMP-binding enzyme family. DltA subfamily.

The protein resides in the cytoplasm. The catalysed reaction is holo-[D-alanyl-carrier protein] + D-alanine + ATP = D-alanyl-[D-alanyl-carrier protein] + AMP + diphosphate. It participates in cell wall biogenesis; lipoteichoic acid biosynthesis. Functionally, catalyzes the first step in the D-alanylation of lipoteichoic acid (LTA), the activation of D-alanine and its transfer onto the D-alanyl carrier protein (Dcp) DltC. In an ATP-dependent two-step reaction, forms a high energy D-alanyl-AMP intermediate, followed by transfer of the D-alanyl residue as a thiol ester to the phosphopantheinyl prosthetic group of the Dcp. D-alanylation of LTA plays an important role in modulating the properties of the cell wall in Gram-positive bacteria, influencing the net charge of the cell wall. This Bacillus cereus (strain Q1) protein is D-alanine--D-alanyl carrier protein ligase.